The sequence spans 1209 residues: Nitric oxide synthase (1209 aa).

Residue Ser-103 coordinates (6R)-L-erythro-5,6,7,8-tetrahydrobiopterin. Cys-181 lines the heme b pocket. Residues Gln-244, Trp-353, Tyr-354, Glu-358, and Asn-363 each contribute to the L-arginine site. Residues Trp-444 and Phe-457 each contribute to the (6R)-L-erythro-5,6,7,8-tetrahydrobiopterin site. Position 472 (Tyr-472) interacts with heme b. Positions 491–511 (VHRKFHFKQIARAVKFTSKLF) are calmodulin-binding. One can recognise a Flavodoxin-like domain in the interval 521–723 (ATILYATETG…QFRAWSSKIF (203 aa)). An FMN-binding site is contributed by 527-531 (TETGK). A disordered region spans residues 603 to 622 (RGDGTSDLGSGTFKTPTPKS). An FMN-binding site is contributed by 669–700 (VFGLGSSAYPKFCHFGKTVDKILGDLGGERIL). The region spanning 776 to 1021 (KQLITCKVKE…IRRAPSFHMP (246 aa)) is the FAD-binding FR-type domain. FAD-binding positions include 811–822 (YDPGDHVGVLAC) and 954–964 (LQPRFYSISSS). Residues 1028–1147 (LILV…QQKL) and 1128–1143 (NGHF…AEEV) each bind NADP(+).

It belongs to the NOS family. Requires heme b as cofactor. The cofactor is FAD. FMN is required as a cofactor. As to expression, constitutively expressed at a low level in the larval fat body, hemocyte, Malpighian tubule, midgut, silk gland and adult antenna.

The catalysed reaction is 2 L-arginine + 3 NADPH + 4 O2 + H(+) = 2 L-citrulline + 2 nitric oxide + 3 NADP(+) + 4 H2O. Expression is dependent on and stimulated by NADPH, calcium, BH4 and calmodulin. The activity is not dependent on FAD and is not stimulated by its presence. In terms of biological role, produces nitric oxide (NO) which is a messenger molecule with diverse functions throughout the body. Involved in the induction of immune gene expression. This chain is Nitric oxide synthase, found in Bombyx mori (Silk moth).